The sequence spans 604 residues: Probable translation initiation factor IF-2 (604 aa).

A tr-type G domain is found at 18–232; it reads IRTPIVCVLG…VLIGLAQRYM (215 aa). Residues 27-34 are G1; sequence GHVDHGKT. 27 to 34 is a GTP binding site; it reads GHVDHGKT. Residues 52–56 are G2; the sequence is AITQH. The tract at residues 88 to 91 is G3; sequence DTPG. GTP is bound by residues 88–92 and 142–145; these read DTPGH and TKLD. The G4 stretch occupies residues 142 to 145; that stretch reads TKLD. Positions 210-212 are G5; that stretch reads SAH.

This sequence belongs to the TRAFAC class translation factor GTPase superfamily. Classic translation factor GTPase family. IF-2 subfamily.

Its function is as follows. Function in general translation initiation by promoting the binding of the formylmethionine-tRNA to ribosomes. Seems to function along with eIF-2. This Methanospirillum hungatei JF-1 (strain ATCC 27890 / DSM 864 / NBRC 100397 / JF-1) protein is Probable translation initiation factor IF-2.